The following is a 179-amino-acid chain: Ribosome maturation factor RimM (179 aa).

One can recognise a PRC barrel domain in the interval 100-176; it reads KEEFHLLELI…FLIINPPNGL (77 aa).

It belongs to the RimM family. In terms of assembly, binds ribosomal protein uS19.

The protein localises to the cytoplasm. Its function is as follows. An accessory protein needed during the final step in the assembly of 30S ribosomal subunit, possibly for assembly of the head region. Essential for efficient processing of 16S rRNA. May be needed both before and after RbfA during the maturation of 16S rRNA. It has affinity for free ribosomal 30S subunits but not for 70S ribosomes. The protein is Ribosome maturation factor RimM of Prochlorococcus marinus (strain MIT 9312).